The primary structure comprises 62 residues: Large ribosomal subunit protein bL28 (62 aa).

This sequence belongs to the bacterial ribosomal protein bL28 family.

The protein is Large ribosomal subunit protein bL28 of Onion yellows phytoplasma (strain OY-M).